The chain runs to 79 residues: Cell division protein ZapB (79 aa).

Residues 3–79 (LEVFEKLEAK…QALLGRMEEV (77 aa)) are a coiled coil. K8 is modified (N6-acetyllysine). Residues 34 to 65 (NNSLSQEVQNAQHQREELERENNHLKEQQNGW) are disordered. The segment covering 35–45 (NSLSQEVQNAQ) has biased composition (polar residues). The span at 46–60 (HQREELERENNHLKE) shows a compositional bias: basic and acidic residues.

It belongs to the ZapB family. As to quaternary structure, homodimer. The ends of the coiled-coil dimer bind to each other, forming polymers. Interacts with FtsZ.

Its subcellular location is the cytoplasm. In terms of biological role, non-essential, abundant cell division factor that is required for proper Z-ring formation. It is recruited early to the divisome by direct interaction with FtsZ, stimulating Z-ring assembly and thereby promoting cell division earlier in the cell cycle. Its recruitment to the Z-ring requires functional FtsA or ZipA. This Shigella boydii serotype 18 (strain CDC 3083-94 / BS512) protein is Cell division protein ZapB.